Reading from the N-terminus, the 346-residue chain is uncharacterized protein (346 aa).

This sequence belongs to the PhyH family.

It localises to the cytoplasm. This is an uncharacterized protein from Saccharomyces cerevisiae (strain ATCC 204508 / S288c) (Baker's yeast).